The primary structure comprises 487 residues: Probable cytochrome P450 513B1 (487 aa).

The helical transmembrane segment at 1-18 threads the bilayer; it reads MNLLVLSVILAIIIYLIF. Cysteine 433 contributes to the heme binding site.

The protein belongs to the cytochrome P450 family. Heme serves as cofactor.

The protein resides in the membrane. The polypeptide is Probable cytochrome P450 513B1 (cyp513B1) (Dictyostelium discoideum (Social amoeba)).